The chain runs to 396 residues: Succinyl-diaminopimelate desuccinylase (396 aa).

H74 contributes to the Zn(2+) binding site. D76 is a catalytic residue. D107 provides a ligand contact to Zn(2+). Catalysis depends on E142, which acts as the Proton acceptor. The Zn(2+) site is built by E143, E171, and H360.

Belongs to the peptidase M20A family. DapE subfamily. In terms of assembly, homodimer. The cofactor is Zn(2+). Co(2+) serves as cofactor.

The enzyme catalyses N-succinyl-(2S,6S)-2,6-diaminopimelate + H2O = (2S,6S)-2,6-diaminopimelate + succinate. Its pathway is amino-acid biosynthesis; L-lysine biosynthesis via DAP pathway; LL-2,6-diaminopimelate from (S)-tetrahydrodipicolinate (succinylase route): step 3/3. Catalyzes the hydrolysis of N-succinyl-L,L-diaminopimelic acid (SDAP), forming succinate and LL-2,6-diaminopimelate (DAP), an intermediate involved in the bacterial biosynthesis of lysine and meso-diaminopimelic acid, an essential component of bacterial cell walls. The polypeptide is Succinyl-diaminopimelate desuccinylase (Methylobacterium nodulans (strain LMG 21967 / CNCM I-2342 / ORS 2060)).